Consider the following 348-residue polypeptide: Spermidine/putrescine import ATP-binding protein PotA (348 aa).

The 231-residue stretch at 6-236 (IRLVNVTKEY…PKNVFVADFI (231 aa)) folds into the ABC transporter domain. Residue 38–45 (GPSGCGKT) participates in ATP binding.

It belongs to the ABC transporter superfamily. Spermidine/putrescine importer (TC 3.A.1.11.1) family. As to quaternary structure, the complex is composed of two ATP-binding proteins (PotA), two transmembrane proteins (PotB and PotC) and a solute-binding protein (PotD).

The protein resides in the cell membrane. It catalyses the reaction ATP + H2O + polyamine-[polyamine-binding protein]Side 1 = ADP + phosphate + polyamineSide 2 + [polyamine-binding protein]Side 1.. In terms of biological role, part of the ABC transporter complex PotABCD involved in spermidine/putrescine import. Responsible for energy coupling to the transport system. This chain is Spermidine/putrescine import ATP-binding protein PotA, found in Desulfitobacterium hafniense (strain Y51).